The chain runs to 554 residues: Esterase cest-33 (554 aa).

Residue glycine 2 is the site of N-myristoyl glycine attachment. An intrachain disulfide couples cysteine 76 to cysteine 98. The Acyl-ester intermediate role is filled by serine 208. Catalysis depends on charge relay system residues glutamate 331 and histidine 446.

Belongs to the type-B carboxylesterase/lipase family.

The protein resides in the cytoplasm. It localises to the cell membrane. It carries out the reaction a carboxylic ester + H2O = an alcohol + a carboxylate + H(+). The sequence is that of Esterase cest-33 from Caenorhabditis elegans.